We begin with the raw amino-acid sequence, 453 residues long: Vacuolar cation/proton exchanger 1b (453 aa).

The Cytoplasmic segment spans residues 1-67 (MPVSRMMMES…LRSLLANLND (67 aa)). Residues 68 to 85 (VLLTTRLFLLFPAVLLAI) traverse the membrane as a helical segment. Residues 86-91 (AATYLH) lie on the Extracellular side of the membrane. A helical transmembrane segment spans residues 92 to 109 (FGQVWVFVLSLIGLVPLA). Residues 110–126 (ERLSFLTEQIAFYTGPT) lie on the Cytoplasmic side of the membrane. A helical transmembrane segment spans residues 127–147 (VGGLLNATFGNVTEVIIALLA). Residues 136–171 (GNVTEVIIALLALREGKIEVVKCSLLGSILSNLLLV) are cation selection. Residues 148-160 (LREGKIEVVKCSL) lie on the Extracellular side of the membrane. Residues 161 to 181 (LGSILSNLLLVLGTSLFLAGI) form a helical membrane-spanning segment. Over 182 to 194 (ANLRAHQPYDTKQ) the chain is Cytoplasmic. Residues 195–215 (AHVNTALLMLAVLCHSLPLML) form a helical membrane-spanning segment. Residues 216–232 (RYAVTSGDHAIVSGDAA) lie on the Extracellular side of the membrane. A helical membrane pass occupies residues 233 to 253 (LHLSRACSILMLIAYLAYLFF). Over 254 to 283 (QLNTHRQLFEPQQVEDDDDDDLVIAQDDEP) the chain is Cytoplasmic. Residues 284 to 304 (VLGFSSAMIWLALMTLLTALL) traverse the membrane as a helical segment. At 305 to 327 (SGYVVSTIEAASESWELSVSFIS) the chain is on the extracellular side. A helical transmembrane segment spans residues 328–348 (IILLPIVGNAAEHAGAVIFAL). Residues 335-370 (GNAAEHAGAVIFALKNKMDITLGVSLGSATQISMFV) form a cation selection region. The Cytoplasmic segment spans residues 349 to 364 (KNKMDITLGVSLGSAT). Residues 365–385 (QISMFVVPVSVIVAWTMGIPM) traverse the membrane as a helical segment. The Extracellular segment spans residues 386-388 (DLD). Residues 389-409 (FNLLETGSLFLAILVTAFTLQ) form a helical membrane-spanning segment. At 410-414 (EGESH) the chain is on the cytoplasmic side. Residues 415 to 435 (YLKGLILVLCYAVISVCFFVI) traverse the membrane as a helical segment. The Extracellular portion of the chain corresponds to 436 to 453 (RRRSAGGTDGVHHLDVIV).

This sequence belongs to the Ca(2+):cation antiporter (CaCA) (TC 2.A.19) family. Cation/proton exchanger (CAX) subfamily. In terms of tissue distribution, expressed in embryo and roots.

The protein resides in the vacuole membrane. Functionally, vacuolar cation/proton exchanger (CAX). Translocates Ca(2+) and other metal ions into vacuoles using the proton gradient formed by H(+)-ATPase and H(+)-pyrophosphatase. This Oryza sativa subsp. japonica (Rice) protein is Vacuolar cation/proton exchanger 1b (CAX1b).